Reading from the N-terminus, the 488-residue chain is 3-octaprenyl-4-hydroxybenzoate carboxy-lyase (488 aa).

Residue Asn172 participates in Mn(2+) binding. Residues 175-177 (IYR), 189-191 (RWL), and 194-195 (RG) contribute to the prenylated FMN site. Glu238 is a binding site for Mn(2+). Asp287 (proton donor) is an active-site residue.

This sequence belongs to the UbiD family. In terms of assembly, homohexamer. Requires prenylated FMN as cofactor. Mn(2+) is required as a cofactor.

The protein localises to the cell membrane. The catalysed reaction is a 4-hydroxy-3-(all-trans-polyprenyl)benzoate + H(+) = a 2-(all-trans-polyprenyl)phenol + CO2. The protein operates within cofactor biosynthesis; ubiquinone biosynthesis. In terms of biological role, catalyzes the decarboxylation of 3-octaprenyl-4-hydroxy benzoate to 2-octaprenylphenol, an intermediate step in ubiquinone biosynthesis. The sequence is that of 3-octaprenyl-4-hydroxybenzoate carboxy-lyase from Pseudomonas savastanoi pv. phaseolicola (strain 1448A / Race 6) (Pseudomonas syringae pv. phaseolicola (strain 1448A / Race 6)).